Consider the following 374-residue polypeptide: Glutamate 5-kinase (374 aa).

Residue K16 participates in ATP binding. Residues S56, D143, and N155 each contribute to the substrate site. Residue 175–176 coordinates ATP; it reads TD. Residues 282–360 enclose the PUA domain; that stretch reads RGRVVLDAGA…SEIEAVLGYV (79 aa).

The protein belongs to the glutamate 5-kinase family.

It localises to the cytoplasm. The enzyme catalyses L-glutamate + ATP = L-glutamyl 5-phosphate + ADP. Its pathway is amino-acid biosynthesis; L-proline biosynthesis; L-glutamate 5-semialdehyde from L-glutamate: step 1/2. Catalyzes the transfer of a phosphate group to glutamate to form L-glutamate 5-phosphate. The polypeptide is Glutamate 5-kinase (Ralstonia pickettii (strain 12J)).